The sequence spans 226 residues: Pre-mRNA-splicing factor SPF27 (226 aa).

Ala-2 bears the N-acetylalanine mark. Ser-94 is subject to Phosphoserine. A coiled-coil region spans residues 139-223; the sequence is YNENLVHMIE…HGEANKENIR (85 aa).

The protein belongs to the SPF27 family. In terms of assembly, component of the pre-catalytic and catalytic spliceosome complexes. Component of the postcatalytic spliceosome P complex. Component of the PRP19-CDC5L splicing complex composed of a core complex comprising a homotetramer of PRPF19, CDC5L, PLRG1 and BCAS2, and at least three less stably associated proteins CTNNBL1, CWC15 and HSPA8. Interacts directly in the complex with PRPF19, CDC5L and PLRG1.

Its subcellular location is the nucleus. It localises to the nucleolus. Its function is as follows. Required for pre-mRNA splicing as component of the activated spliceosome. Component of the PRP19-CDC5L complex that forms an integral part of the spliceosome and is required for activating pre-mRNA splicing. May have a scaffolding role in the spliceosome assembly as it contacts all other components of the core complex. The PRP19-CDC5L complex may also play a role in the response to DNA damage (DDR). In Pongo abelii (Sumatran orangutan), this protein is Pre-mRNA-splicing factor SPF27 (BCAS2).